The sequence spans 193 residues: Molybdopterin synthase catalytic subunit (193 aa).

Substrate contacts are provided by residues 118–119, K134, and 141–143; these read HR and KKE. Residues 159-193 are disordered; sequence DRTTTDGTTASSPAPATRPAKGGGCCGSKVRANES. Low complexity predominate over residues 163 to 178; it reads TDGTTASSPAPATRPA.

This sequence belongs to the MoaE family. MOCS2B subfamily. In terms of assembly, heterotetramer; composed of 2 small (MOCS2A) and 2 large (MOCS2B) subunits.

It localises to the cytoplasm. It catalyses the reaction 2 [molybdopterin-synthase sulfur-carrier protein]-C-terminal-Gly-aminoethanethioate + cyclic pyranopterin phosphate + H2O = molybdopterin + 2 [molybdopterin-synthase sulfur-carrier protein]-C-terminal Gly-Gly + 2 H(+). Its pathway is cofactor biosynthesis; molybdopterin biosynthesis. Functionally, catalytic subunit of the molybdopterin synthase complex, a complex that catalyzes the conversion of precursor Z into molybdopterin. Acts by mediating the incorporation of 2 sulfur atoms from thiocarboxylated MOCS2A into precursor Z to generate a dithiolene group. This chain is Molybdopterin synthase catalytic subunit, found in Oryza sativa subsp. indica (Rice).